A 268-amino-acid chain; its full sequence is Tryptophan synthase alpha chain (268 aa).

Residues Glu49 and Asp60 each act as proton acceptor in the active site.

It belongs to the TrpA family. As to quaternary structure, tetramer of two alpha and two beta chains.

The enzyme catalyses (1S,2R)-1-C-(indol-3-yl)glycerol 3-phosphate + L-serine = D-glyceraldehyde 3-phosphate + L-tryptophan + H2O. Its pathway is amino-acid biosynthesis; L-tryptophan biosynthesis; L-tryptophan from chorismate: step 5/5. Its function is as follows. The alpha subunit is responsible for the aldol cleavage of indoleglycerol phosphate to indole and glyceraldehyde 3-phosphate. This Shigella flexneri serotype 5b (strain 8401) protein is Tryptophan synthase alpha chain.